Reading from the N-terminus, the 309-residue chain is Zinc finger CCCH domain-containing protein 31 (309 aa).

The disordered stretch occupies residues 1-36 (MEGAGAARKRSRPDTANGGAAGGKRSRETESFQTGL). C3H1-type zinc fingers lie at residues 37–65 (SSKLKPCTKFFSTIGCPFGEGCHFSHFVP) and 103–131 (SGKTRMCTKYNTAEGCKFGDKCHFAHGER). A disordered region spans residues 86–106 (ARAPMDHAAGGNSHPASSGKT). Residues 175-239 (SATAKISVDA…DQIKQASNMV (65 aa)) enclose the KH domain. A disordered region spans residues 249–273 (STPAKKPAGSAAGAAPAGRGGPGGR). The span at 251-265 (PAKKPAGSAAGAAPA) shows a compositional bias: low complexity. Residues 275–302 (NYKTKLCENFVKGTCTFGDRCHFAHGEN) form a C3H1-type 3 zinc finger.

The polypeptide is Zinc finger CCCH domain-containing protein 31 (Oryza sativa subsp. japonica (Rice)).